Here is a 316-residue protein sequence, read N- to C-terminus: Acetyl-coenzyme A carboxylase carboxyl transferase subunit beta, chloroplastic (316 aa).

The CoA carboxyltransferase N-terminal domain occupies 47–316 (LWTRCDNCEN…CKKFQNSFFK (270 aa)). Zn(2+)-binding residues include cysteine 51, cysteine 54, cysteine 70, and cysteine 73. A C4-type zinc finger spans residues 51-73 (CDNCENMLYVRFLRQNKRICEEC).

This sequence belongs to the AccD/PCCB family. Acetyl-CoA carboxylase is a heterohexamer composed of biotin carboxyl carrier protein, biotin carboxylase and 2 subunits each of ACCase subunit alpha and ACCase plastid-coded subunit beta (accD). Zn(2+) is required as a cofactor.

Its subcellular location is the plastid. It is found in the chloroplast stroma. The enzyme catalyses N(6)-carboxybiotinyl-L-lysyl-[protein] + acetyl-CoA = N(6)-biotinyl-L-lysyl-[protein] + malonyl-CoA. Its pathway is lipid metabolism; malonyl-CoA biosynthesis; malonyl-CoA from acetyl-CoA: step 1/1. In terms of biological role, component of the acetyl coenzyme A carboxylase (ACC) complex. Biotin carboxylase (BC) catalyzes the carboxylation of biotin on its carrier protein (BCCP) and then the CO(2) group is transferred by the transcarboxylase to acetyl-CoA to form malonyl-CoA. This Marchantia polymorpha (Common liverwort) protein is Acetyl-coenzyme A carboxylase carboxyl transferase subunit beta, chloroplastic.